We begin with the raw amino-acid sequence, 185 residues long: Acireductone dioxygenase (185 aa).

The disordered stretch occupies residues 1 to 22; it reads MSRLSIHPEGSTNATSPAEPLL. Histidine 102, histidine 104, glutamate 108, and histidine 146 together coordinate Fe(2+). Histidine 102, histidine 104, glutamate 108, and histidine 146 together coordinate Ni(2+).

It belongs to the acireductone dioxygenase (ARD) family. Monomer. Fe(2+) is required as a cofactor. Requires Ni(2+) as cofactor.

The enzyme catalyses 1,2-dihydroxy-5-(methylsulfanyl)pent-1-en-3-one + O2 = 3-(methylsulfanyl)propanoate + CO + formate + 2 H(+). The catalysed reaction is 1,2-dihydroxy-5-(methylsulfanyl)pent-1-en-3-one + O2 = 4-methylsulfanyl-2-oxobutanoate + formate + 2 H(+). It participates in amino-acid biosynthesis; L-methionine biosynthesis via salvage pathway; L-methionine from S-methyl-5-thio-alpha-D-ribose 1-phosphate: step 5/6. In terms of biological role, catalyzes 2 different reactions between oxygen and the acireductone 1,2-dihydroxy-3-keto-5-methylthiopentene (DHK-MTPene) depending upon the metal bound in the active site. Fe-containing acireductone dioxygenase (Fe-ARD) produces formate and 2-keto-4-methylthiobutyrate (KMTB), the alpha-ketoacid precursor of methionine in the methionine recycle pathway. Ni-containing acireductone dioxygenase (Ni-ARD) produces methylthiopropionate, carbon monoxide and formate, and does not lie on the methionine recycle pathway. The sequence is that of Acireductone dioxygenase from Prochlorococcus marinus (strain MIT 9313).